The following is a 794-amino-acid chain: Protein sel-1 homolog 1 (794 aa).

The first 21 residues, 1 to 21 (MQVHVGLTLLLCAVLLSSATA), serve as a signal peptide directing secretion. Positions 20-91 (TASSDDESNQ…EEEVSVGEEI (72 aa)) are disordered. Residues 22 to 737 (SSDDESNQDE…DIFTQLDMDQ (716 aa)) form an interaction with ERLEC1, OS9 and SYVN1 region. The Lumenal portion of the chain corresponds to 22–738 (SSDDESNQDE…IFTQLDMDQL (717 aa)). Composition is skewed to acidic residues over residues 23-32 (SDDESNQDES) and 62-77 (DSEDPEVESPLQEEEE). Ser-63 is subject to Phosphoserine. Residues 122–170 (AHGEPCHFPFLFLDKEYDECTSDGRQDGRLWCATTYDYKTDEKWGFCET) form the Fibronectin type-II domain. 2 disulfide bridges follow: Cys-127–Cys-153 and Cys-141–Cys-168. Sel1-like repeat units follow at residues 183–218 (AEMIYQAGMKILNGSNRKSQKREAYRYLQKAAGMNH), 219–254 (TKALERVSYALLFGDYLTQNIQAAKEMFEKLTEEGS), 255–290 (PKGQTALGFLYVSGLGVNSSQAKALVYYTFGALGGN), 291–326 (LIAHMVLGYRYWAGIGVLQSCESVLTHYRLVANHVA), 373–409 (VQAQVGLGQLHLHGGRGVEQNHQRAFDYFNLAANAGN), 410–446 (SHAMAFLGKMYSEGSDIVPQSNETALHYFKKAADMGN), 447–482 (PVGQSGLGMAYLYGRGIQVNYDLALKYFQKAAEQGW), 483–518 (VDGQLQLGSMYYNGIGVKRDYKQALKYFNLASQGGH), and 519–554 (ILAFYNLAQMHASGTGVMRSCHTAVELFKNVCERGR). Residues Asn-195 and Asn-217 are each glycosylated (N-linked (GlcNAc...) asparagine). A glycan (N-linked (GlcNAc...) asparagine) is linked at Asn-272. The interval 352-537 (NSGMLEEDLI…MHASGTGVMR (186 aa)) is important for homodimerization and oligomerization. A glycan (N-linked (GlcNAc...) asparagine) is linked at Asn-431. Asn-608 is a glycosylation site (N-linked (GlcNAc...) asparagine). Sel1-like repeat units lie at residues 627 to 662 (TVARIKLGDYHFYGFGTDVDYETAFIHYRLASEQQH) and 664 to 699 (AQAMFNLGYMHEKGLGIKQDIHLAKRFYDMAAEASP). An interaction with SYVN1 region spans residues 643-723 (TDVDYETAFI…VVYFLQYIRE (81 aa)). The segment at 738 to 794 (LLGPEWDLYLMTIIALLLGTVIAYRQRQHQDVPVPRPPGPWPAPPQQEGPPEQQPPQ) is mediates retention in the endoplasmic reticulum. A helical membrane pass occupies residues 739–759 (LGPEWDLYLMTIIALLLGTVI). Topologically, residues 760 to 794 (AYRQRQHQDVPVPRPPGPWPAPPQQEGPPEQQPPQ) are cytoplasmic. Residues 768–794 (DVPVPRPPGPWPAPPQQEGPPEQQPPQ) are disordered. Positions 771–794 (VPRPPGPWPAPPQQEGPPEQQPPQ) are enriched in pro residues.

The protein belongs to the sel-1 family. In terms of assembly, homodimer and homooligomer. May form a complex with ERLEC1, HSPA5, OS9, and SYVN1. Interacts with FOXRED2 and EDEM1. Interacts with LPL and LMF1; may stabilize the complex formed by LPL and LMF1 and thereby promote the export of LPL dimers. Component of the HRD1 complex, which comprises at least SYNV1/HRD1, DERL1/2, FAM8A1, HERPUD1/HERP, OS9, SEL1L and UBE2J1. SYNV1 assembles with SEL1L and FAM8A1 through its transmembrane domains, but interaction with its cytoplasmic domain is required to confer stability to FAM8A1 and enhance recruitment of HERPUD1. The interaction with SYNV1/HRD1 is direct. In terms of processing, N-glycosylated.

It is found in the endoplasmic reticulum membrane. Its function is as follows. Plays a role in the endoplasmic reticulum quality control (ERQC) system also called ER-associated degradation (ERAD) involved in ubiquitin-dependent degradation of misfolded endoplasmic reticulum proteins. Enhances SYVN1 stability. Plays a role in LPL maturation and secretion. Required for normal differentiation of the pancreas epithelium, and for normal exocrine function and survival of pancreatic cells. May play a role in Notch signaling. The protein is Protein sel-1 homolog 1 (Sel1l) of Mesocricetus auratus (Golden hamster).